The following is a 128-amino-acid chain: DNA polymerase epsilon subunit 3 (128 aa).

Over residues 98–110 the composition is skewed to basic and acidic residues; it reads EKKESKASKKDSN. Positions 98–128 are disordered; it reads EKKESKASKKDSNTAENANASATATAEEAPE. Positions 111 to 128 are enriched in low complexity; that stretch reads TAENANASATATAEEAPE.

In terms of assembly, homodimer. Component of the DNA polymerase epsilon complex consisting of four subunits: the catalytic subunit PolE1/DNApol-epsilon255 and the accessory subunits PolE2/DNApol-epsilon58, Chrac-14/DNApolE3 and PolE4. Component of the chromatin accessibility complex (CHRAC), composed of Chrac-14, Chrac-16, Acf and Iswi. Forms an heterodimer with Chrac-16. The Chrac-14/Chrac-16 heterodimer interacts with Acf (via N-terminus). Interacts directly with Iswi and this interaction is further stabilized by association with Chrac-16. Component of the Ada2a-containing (ATAC) complex composed of at least Ada2a, Atac1, Hcf, Ada3, Gcn5, Mocs2B, Charac-14, Atac3, Atac2, NC2beta and wds. Interacts with cid.

The protein resides in the nucleus. In terms of biological role, accessory component of the DNA polymerase epsilon complex. Participates in DNA repair and in chromosomal DNA replication. Histone-like protein which promotes nucleosome sliding of ATP-dependent nucleosome remodeling complexes. Part of the chromatin-accessibility complex (CHRAC) which uses energy/ATP to increase the general accessibility of DNA in chromatin. As a heterodimer with Chrac-16, binds DNA and facilitates nucleosome sliding by Acf. Has a role in DNA damage response by preventing cid mislocalization to chromatin. The chain is DNA polymerase epsilon subunit 3 from Drosophila melanogaster (Fruit fly).